The sequence spans 304 residues: Bifunctional protein FolD (304 aa).

NADP(+)-binding positions include 176–178, isoleucine 201, and isoleucine 242; that span reads GAS.

It belongs to the tetrahydrofolate dehydrogenase/cyclohydrolase family. In terms of assembly, homodimer.

The enzyme catalyses (6R)-5,10-methylene-5,6,7,8-tetrahydrofolate + NADP(+) = (6R)-5,10-methenyltetrahydrofolate + NADPH. The catalysed reaction is (6R)-5,10-methenyltetrahydrofolate + H2O = (6R)-10-formyltetrahydrofolate + H(+). Its pathway is one-carbon metabolism; tetrahydrofolate interconversion. In terms of biological role, catalyzes the oxidation of 5,10-methylenetetrahydrofolate to 5,10-methenyltetrahydrofolate and then the hydrolysis of 5,10-methenyltetrahydrofolate to 10-formyltetrahydrofolate. This is Bifunctional protein FolD from Gluconobacter oxydans (strain 621H) (Gluconobacter suboxydans).